The primary structure comprises 2839 residues: MVDSSYMCASNAFIPRISYSRSIDLKDSLLDLVKVQKESYKSFTPGNHGNERLESIFRSVFPINDPLHRATIEFISCRIDNPKYDESECIKRGITFSARVIASIRLVIMQDGISLDEYKSIKGSGDHSKLSTIIKFIGEQEVHFCELPMMTDKGTFIINGVEKVIVSQMHRSPGVFFDSDKGKTYNSGKLIYSARVIPYRGSWLDIEFDVKDLLYFRIDRKRKLPISVLLKALGLSNSDILDRFYEKIKYIKYKNSWKVPFVPDKFKGVRLPFDLMDVEGNVLFKANVRITSRLAKKLHDDELKEYLVPFDSICGLFLAEDLIDSVSSTKILSAGESIKIEDVKKLELLSIGEISVLNIDNLSVGPYILNTLFLDENMSYQDALYEIYKVLRPGEVPVLEIVEEFFHNLFFNPEYYDLSNIGRLKLNSYLGLDYDEDLTVLTHEDIIEIVRKIVLLRDGQGSVDDIDHLGNRRVRSVGEFIENQFRAGLLKLERAVIDSMSTSSLDKVSSPDFINPKVLTNVLRDFFNSSQLSQFMDQTNPLSEITHKRRLSALGPGGLTRDRAGFEVRDVHPTHYGRICPIETPEGQNIGLINSLAIYARVNKYGFIESPYRKVINRVATDQIEYLSAIDEGLYYIADASAKLDNNNRFIDDMLYCRYAGNFVMVSSDQVSYIDVSPKQVISVAASLIPFLENDDANRALMGSNMQRQAVPLLKPTAPLVGTGIESFVASGSGAVVLAKRDGIVDSSDSNSIVIRAFDEERVNYLGVDIYHLKKFQRSNHNTCINQKPLVRIGDYVKEGDVIADGPAINSGELALGQNLLVAFMSWQGYNFEDSIIISSEIVKKDLFTSIHIEEFECVVHDTPLGSEKITRAIPGVNEENLYHLDNSGIVKIGTRVGPGYILVGKITPKPSLLLPPETKLLMTIFGEKSFDCADSSLYTSPDVEGTVIDVQVFTRRGVEENERALLIKQKEMNDLEKERDYIINVASEYFYDELKKLLVHSCSQDQEKLDAIEREQWWGIGLKNRSISEQVKNLKKDFDKKVSNTIAQFKQKVEKLDEGYDLPQGVLMSVKVFIAVKHSLQPGDKMAGRHGNKGVISRVVPVEDMPYLEDGTPVDIILNPLGVPSRMNVGQILETHVGWACKKLGERVGNILDEINKINSDFCKEIRSLDDNNFAKFAAVYFDNKKTEEVRDDEITDSLVNIPNKGLLNDELNALVENYLNSCKSAYDNLRSFLIEVYSCGSDVSICNNIRDISNSNLIEFAHKLRNGIPVAAPVFEGPKDKNIIKLFTLAGLDPSGQTEAYDGRTGEKFDRKVTVGYMYMLKLHHLVDDKIHARSVGPYSLVTQQPLGGKSHFGGQRFGEMECWALQAYGAAYTLQEMLTVKSDDINGRVKIYESIIKGDSNFECGTPESFNVMIKELRSLCLNVALKQNNVVIEDISHTNIAQSFDKIGISIASPENIKSMSYGEVKDVSTANYRTFKVEKGGLFCPKIFGPVNDDECLCGKYKKRRHRGRICEKCGVEVTSSKVRRERMGHIELASPVAHIWFLKSLPSRIGALLDMSLRDIENILYSDNYIVIDPLVSPFEKGEIISEKIYNEAKDDYGIDSFVAMQGVEAIRELLTCLDLHQIRKDLRLELESVASEIRRKKIIKRLRIIENFIKSGNRPEWMILTTIPILPPDLRPLVSLESGRPAVSDLNHHYRTIINRNNRLRKLLSLNPPEIMIRNEKRMLQEAVDSLFDNSRRNALTNKAGAIGYKKSISDMLKGKQGRFRQNLLGKRVDYSGRSVIVVGPALKLNQCGLPKRMALELFKPFVYSKLKLYGMAPTIKFASKLIRAEKPEVWDMLEEVIKEHPVLLNRAPTLHRLGIQAFEPILIEGKAIQLHPLVCTAFNADFDGDQMAVHVPISLEAQLEARVLMMSTNNVLSPSNGRPIIVPSKDIILGIYYLTLQEQTDKEGDDLPFLGTFGEVEHSLSDGTLHIHSSIKYRIEYTNSEGETCYKTIRTTPGRLILWQIFPKHENLNFDLVNQVLTVKEVTSIVDLIYRNCGQSATVEFSDRLMVLGFEYATFSGISFSRCDLVIPETKAEHVDHARGEIKKFSMQYQDGLITRSERYNKVIDEWSKCTDMIANDMLKSISVYDRNSKYNSVYMMVNSGARGSTSQMKQLAGMRGLMTKPSGEIIETPIISNFREGLNVFEYFNSTHGARKGLADTALKTANSGYLTRRLVDVSQNCIVTKHDCKTKNGLVVRATVEGGTIVASLESVVLGRTAANDIYNPVTKELLVKAGELIDEDKVKQINIAGLDAVKIRSPLTCEVSPGVCSLCYGRDLATGKIVSIGEAVGVIAAQSVGEPGTQLTMRTFHIGGVMTRGVESSNIIASINAKIKLSNSNIIIDKNGDKIAISRSCEVVLIDSLGSEKLRHSIPYGAKLCVDEGKSVKIGDKIAEWDPYTLPIITEKTGTVLYQDLKDGVSITEVMDESTGISSKVVKDWKLYSGGANLRPRIVLLDDNGKVMTLASGIEACYFIPIGAVLNVQDGQKVHAGDVITRTPRESVKTRDITGGLPRVIELFEARRPREHAIVSEIDGHVVFSEKDRRGKRSVLIKPLNEQISPIEYLVSRSKHVIVNEGDFVRKGDLLMDGDPDLHDILRVLGLEALAHYMISEIQQVYRLQGVRIDNKHLEVILKQMLQKVEITDPGDTMYLVGESIDKLEVDKGNDVMSNSGKRPACYLPILQGITRASLETKSFISAASFQETTKVLTEAAFCGKEDPLSGLKENVIVGRLIPAGTGLIMSKVRALSLCDNMDKYEKYFDIEAYDEKLLEDNGCHLHSGKKESVAESRYN.

The segment at M1 to N1433 is DNA-directed RNA polymerase subunit beta. The tract at residues I1436 to N2839 is DNA-directed RNA polymerase subunit beta'. Zn(2+)-binding residues include C1501, C1503, C1516, and C1519. Mg(2+)-binding residues include D1893, D1895, and D1897. C2238, C2312, C2319, and C2322 together coordinate Zn(2+).

It in the N-terminal section; belongs to the RNA polymerase beta chain family. In the C-terminal section; belongs to the RNA polymerase beta' chain family. In terms of assembly, the RNAP catalytic core consists of 2 alpha, 1 beta/beta' and 1 omega subunit. When a sigma factor is associated with the core the holoenzyme is formed, which can initiate transcription. It depends on Mg(2+) as a cofactor. The cofactor is Zn(2+).

The catalysed reaction is RNA(n) + a ribonucleoside 5'-triphosphate = RNA(n+1) + diphosphate. In terms of biological role, DNA-dependent RNA polymerase catalyzes the transcription of DNA into RNA using the four ribonucleoside triphosphates as substrates. The sequence is that of Bifunctional DNA-directed RNA polymerase subunit beta-beta' (rpoBC) from Wolbachia sp. subsp. Brugia malayi (strain TRS).